A 74-amino-acid chain; its full sequence is MEKGTVKWFNNAKGFGFICPEGGGEDIFAHYSTIQMDGYRTLKAGQSVQFDVHQGPKGNHASVIVPVEVEAAVA.

Positions 4–64 (GTVKWFNNAK…GPKGNHASVI (61 aa)) constitute a CSD domain.

In terms of assembly, homodimer.

It is found in the cytoplasm. Its function is as follows. Inhibits DNA replication at both initiation and elongation steps, most probably by binding to the opened, single-stranded regions at replication forks. Plays a regulatory role in chromosomal replication in nutrient-depleted cells. This chain is Cold shock-like protein CspD (cspD), found in Escherichia coli O157:H7.